The sequence spans 649 residues: Threonine--tRNA ligase (649 aa).

In terms of domain architecture, TGS spans 1–63; that stretch reads MSSIKITFPD…KEDGSIEIIT (63 aa). The interval 245-543 is catalytic; the sequence is DHRVIGNELD…LTEMYKGAFP (299 aa). C339, H390, and H520 together coordinate Zn(2+).

Belongs to the class-II aminoacyl-tRNA synthetase family. Homodimer. Zn(2+) serves as cofactor.

The protein localises to the cytoplasm. The catalysed reaction is tRNA(Thr) + L-threonine + ATP = L-threonyl-tRNA(Thr) + AMP + diphosphate + H(+). In terms of biological role, catalyzes the attachment of threonine to tRNA(Thr) in a two-step reaction: L-threonine is first activated by ATP to form Thr-AMP and then transferred to the acceptor end of tRNA(Thr). Also edits incorrectly charged L-seryl-tRNA(Thr). The chain is Threonine--tRNA ligase from Ligilactobacillus salivarius (strain UCC118) (Lactobacillus salivarius).